We begin with the raw amino-acid sequence, 373 residues long: Flagellar P-ring protein 1 (373 aa).

The N-terminal stretch at 1–24 (MRGISRLYWSLVLICFAFAPIVEA) is a signal peptide.

This sequence belongs to the FlgI family. In terms of assembly, the basal body constitutes a major portion of the flagellar organelle and consists of four rings (L,P,S, and M) mounted on a central rod.

Its subcellular location is the periplasm. It localises to the bacterial flagellum basal body. Assembles around the rod to form the L-ring and probably protects the motor/basal body from shearing forces during rotation. In Hahella chejuensis (strain KCTC 2396), this protein is Flagellar P-ring protein 1.